Consider the following 771-residue polypeptide: Ribonucleoside-diphosphate reductase large subunit (771 aa).

One can recognise an ATP-cone domain in the interval 1–92 (MFVIKRNGYK…VSNLHKETKK (92 aa)). ATP-binding positions include 5 to 6 (KR), 11 to 17 (ENVMFDK), threonine 53, aspartate 57, and lysine 88. Residues serine 202 and serine 217 each coordinate GDP. DTTP is bound by residues 226–228 (DSI), lysine 243, and arginine 256. Position 427 (asparagine 427) interacts with GDP. Catalysis depends on asparagine 427, which acts as the Proton acceptor. The Cysteine radical intermediate role is filled by cysteine 429. GDP-binding positions include glutamate 431 and 603-606 (TAST). Glutamate 431 (proton acceptor) is an active-site residue.

It belongs to the ribonucleoside diphosphate reductase large chain family. In terms of assembly, interacts with RNR2/OPG047 subunit. It depends on Mg(2+) as a cofactor.

The catalysed reaction is a 2'-deoxyribonucleoside 5'-diphosphate + [thioredoxin]-disulfide + H2O = a ribonucleoside 5'-diphosphate + [thioredoxin]-dithiol. Functionally, ribonucleoside-diphosphate reductase holoenzyme provides the precursors necessary for viral DNA synthesis. Allows virus growth in non-dividing cells. Catalyzes the biosynthesis of deoxyribonucleotides from the corresponding ribonucleotides. This chain is Ribonucleoside-diphosphate reductase large subunit (OPG080), found in Homo sapiens (Human).